The sequence spans 344 residues: Phenylalanine--tRNA ligase alpha subunit (344 aa).

Glutamate 256 is a binding site for Mg(2+).

It belongs to the class-II aminoacyl-tRNA synthetase family. Phe-tRNA synthetase alpha subunit type 1 subfamily. Tetramer of two alpha and two beta subunits. The cofactor is Mg(2+).

The protein localises to the cytoplasm. It carries out the reaction tRNA(Phe) + L-phenylalanine + ATP = L-phenylalanyl-tRNA(Phe) + AMP + diphosphate + H(+). In Bacillus subtilis (strain 168), this protein is Phenylalanine--tRNA ligase alpha subunit (pheS).